Reading from the N-terminus, the 380-residue chain is Cytochrome b (380 aa).

The next 4 helical transmembrane spans lie at 34–54, 78–99, 114–134, and 179–199; these read FGSL…LLAM, WLIR…YMHI, WNTG…GYVL, and FFAL…IHLT. Residues His-84 and His-98 each coordinate heme b. His-183 and His-197 together coordinate heme b. His-202 is a binding site for a ubiquinone. A run of 4 helical transmembrane segments spans residues 227 to 247, 289 to 309, 321 to 341, and 348 to 368; these read LKDI…ALFS, LGGV…PFLH, LSQS…WIGS, and FIII…ILFP.

The protein belongs to the cytochrome b family. As to quaternary structure, the cytochrome bc1 complex contains 11 subunits: 3 respiratory subunits (MT-CYB, CYC1 and UQCRFS1), 2 core proteins (UQCRC1 and UQCRC2) and 6 low-molecular weight proteins (UQCRH/QCR6, UQCRB/QCR7, UQCRQ/QCR8, UQCR10/QCR9, UQCR11/QCR10 and a cleavage product of UQCRFS1). This cytochrome bc1 complex then forms a dimer. Heme b serves as cofactor.

Its subcellular location is the mitochondrion inner membrane. In terms of biological role, component of the ubiquinol-cytochrome c reductase complex (complex III or cytochrome b-c1 complex) that is part of the mitochondrial respiratory chain. The b-c1 complex mediates electron transfer from ubiquinol to cytochrome c. Contributes to the generation of a proton gradient across the mitochondrial membrane that is then used for ATP synthesis. The sequence is that of Cytochrome b (MT-CYB) from Oceanodroma tristrami (Tristram's storm-petrel).